A 119-amino-acid polypeptide reads, in one-letter code: MIDTTRSLDDLSPARVTTAFDLPGHTTVRSLGVAQGIIVRSRSIVGSFGAALQTIFGGNITLYTSLCEKAREHAFEKMLADARKVGANAIVAMRYDSTEIGSGVTEVICYGTAVIVEPA.

It belongs to the UPF0145 family.

The protein is UPF0145 protein Bcep18194_B0595 of Burkholderia lata (strain ATCC 17760 / DSM 23089 / LMG 22485 / NCIMB 9086 / R18194 / 383).